Here is a 425-residue protein sequence, read N- to C-terminus: Protein translocase subunit SecY (425 aa).

The next 10 helical transmembrane spans lie at 15–35 (LLSL…VPGI), 62–82 (TVVV…SIIM), 113–131 (LLTL…FYLK), 139–159 (LVLA…VLWL), 168–188 (LGNG…PGFV), 201–221 (IGSW…IVLL), 266–286 (PIIL…LGLL), 304–324 (IIYW…YSTI), 364–384 (LLGA…QAIL), and 385–405 (SLSG…GVIL).

This sequence belongs to the SecY/SEC61-alpha family. Component of the plastid Sec protein translocase complex, which is composed of at least SecY, SecE and SecG.

The protein resides in the plastid. It is found in the chloroplast thylakoid membrane. Its function is as follows. The central subunit of the protein translocation channel SecYE. Consists of two halves formed by TMs 1-5 and 6-10. These two domains form a lateral gate at the front which open onto the bilayer between TMs 2 and 7, and are clamped together by SecE at the back. The channel is closed by both a pore ring composed of hydrophobic SecY resides and a short helix (helix 2A) on the extracellular side of the membrane which forms a plug. This chain is Protein translocase subunit SecY, found in Trieres chinensis (Marine centric diatom).